Consider the following 500-residue polypeptide: NAD(P)H-quinone oxidoreductase chain 4, chloroplastic (500 aa).

14 helical membrane passes run 4–24, 37–57, 80–100, 113–130, 134–154, 167–187, 208–228, 242–262, 272–292, 305–325, 330–350, 386–406, 416–436, and 462–482; these read FYWLTIIVVLPISAGSLIALL, ICICLFELLLTTYVFCYHFQL, LGIDGLSIGPILLTGFITTLA, LFHFLMLAMYSGQIGLFS, LLLFFIMWELELIPVYLLLSM, FILYTAGGSIFLLMGVLGMGL, ALEIIFYFGFLIAYAVKSPII, HYSTCMLLAGILLKMGAYGLV, AHSIFSPWLMIVGTIQIIYAA, IAYSSVSHMGFIIIGISSITD, GAILQIISHGFIGAALFFLAG, LALPGMSGFVAELVIFLGIIT, ILITFVMAIGMILTPIYSLSM, and IFILICILLPIIGIGIYPDFV.

This sequence belongs to the complex I subunit 4 family.

The protein resides in the plastid. Its subcellular location is the chloroplast thylakoid membrane. It carries out the reaction a plastoquinone + NADH + (n+1) H(+)(in) = a plastoquinol + NAD(+) + n H(+)(out). The enzyme catalyses a plastoquinone + NADPH + (n+1) H(+)(in) = a plastoquinol + NADP(+) + n H(+)(out). The sequence is that of NAD(P)H-quinone oxidoreductase chain 4, chloroplastic from Nuphar advena (Common spatterdock).